The chain runs to 189 residues: UPF0301 protein PLES_04031 (189 aa).

Belongs to the UPF0301 (AlgH) family.

The sequence is that of UPF0301 protein PLES_04031 from Pseudomonas aeruginosa (strain LESB58).